Reading from the N-terminus, the 206-residue chain is Oligoribonuclease (206 aa).

Residues 20–183 (LVWLDMEMTG…ADIHESIDEL (164 aa)) enclose the Exonuclease domain. Residue tyrosine 141 is part of the active site.

Belongs to the oligoribonuclease family.

Its subcellular location is the cytoplasm. 3'-to-5' exoribonuclease specific for small oligoribonucleotides. The protein is Oligoribonuclease of Burkholderia ambifaria (strain ATCC BAA-244 / DSM 16087 / CCUG 44356 / LMG 19182 / AMMD) (Burkholderia cepacia (strain AMMD)).